A 204-amino-acid chain; its full sequence is MTEQKVVIIDTGCANVSSVKFAIERLGYDVTISKDPQVVLSADKLFLPGVGTASEAMKNLEERDLINLVKQVEKPLLGICLGMQLLGKFSQEKGQKADELVECLGLCDGEVKLLQTGDLPLPHMGWNTVSAKAGNPLFKDIEEGEYFYFVHSFAMPVGDYTIAECDYGNPFTAAVQSGNYYGVQFHPERSSKAGAKLIQNFLEL.

The Glutamine amidotransferase type-1 domain maps to 5–204 (KVVIIDTGCA…AKLIQNFLEL (200 aa)). Cys-80 (nucleophile) is an active-site residue. Residues His-186 and Glu-188 contribute to the active site.

Heterodimer of HisH and HisF.

The protein localises to the cytoplasm. It catalyses the reaction 5-[(5-phospho-1-deoxy-D-ribulos-1-ylimino)methylamino]-1-(5-phospho-beta-D-ribosyl)imidazole-4-carboxamide + L-glutamine = D-erythro-1-(imidazol-4-yl)glycerol 3-phosphate + 5-amino-1-(5-phospho-beta-D-ribosyl)imidazole-4-carboxamide + L-glutamate + H(+). The catalysed reaction is L-glutamine + H2O = L-glutamate + NH4(+). Its pathway is amino-acid biosynthesis; L-histidine biosynthesis; L-histidine from 5-phospho-alpha-D-ribose 1-diphosphate: step 5/9. IGPS catalyzes the conversion of PRFAR and glutamine to IGP, AICAR and glutamate. The HisH subunit catalyzes the hydrolysis of glutamine to glutamate and ammonia as part of the synthesis of IGP and AICAR. The resulting ammonia molecule is channeled to the active site of HisF. The polypeptide is Imidazole glycerol phosphate synthase subunit HisH (Vibrio parahaemolyticus serotype O3:K6 (strain RIMD 2210633)).